The following is a 271-amino-acid chain: MNSASREALAAARERLDALTDNTSVDAAKLAEELASVTALLDREVSLRRVLTDPAQSGESKAELAARLLGGQVGGETLDLVSGLVRSRWSQSRDLVDSVEELANTADLTAAQRGGNLDDVEDELFRFGRIVGSDKELRSALTSRTATASAKGELLRSLLGGKAQPVTERIIVRLVTQPRGRSLEAGLDSLSKLAAERRDRMVAVVTSAVPLSDRQKQRLGAALAKLYGRQMHLNLDVDPAVLGGISVRVGDEIINGTVAERLEEATRRMAG.

It belongs to the ATPase delta chain family. In terms of assembly, F-type ATPases have 2 components, F(1) - the catalytic core - and F(0) - the membrane proton channel. F(1) has five subunits: alpha(3), beta(3), gamma(1), delta(1), epsilon(1). F(0) has three main subunits: a(1), b(2) and c(10-14). The alpha and beta chains form an alternating ring which encloses part of the gamma chain. F(1) is attached to F(0) by a central stalk formed by the gamma and epsilon chains, while a peripheral stalk is formed by the delta and b chains.

It localises to the cell membrane. F(1)F(0) ATP synthase produces ATP from ADP in the presence of a proton or sodium gradient. F-type ATPases consist of two structural domains, F(1) containing the extramembraneous catalytic core and F(0) containing the membrane proton channel, linked together by a central stalk and a peripheral stalk. During catalysis, ATP synthesis in the catalytic domain of F(1) is coupled via a rotary mechanism of the central stalk subunits to proton translocation. Its function is as follows. This protein is part of the stalk that links CF(0) to CF(1). It either transmits conformational changes from CF(0) to CF(1) or is implicated in proton conduction. In Streptomyces griseus subsp. griseus (strain JCM 4626 / CBS 651.72 / NBRC 13350 / KCC S-0626 / ISP 5235), this protein is ATP synthase subunit delta.